The following is a 591-amino-acid chain: Tricyclene synthase, chloroplastic (591 aa).

A chloroplast-targeting transit peptide spans 1–45; that stretch reads MATLLQIGSGVIYSNALRKTLRRPQSSTCIIVTETTPCNKSPTVQ. Residues arginine 302, aspartate 339, aspartate 343, arginine 481, and asparagine 484 each coordinate (2E)-geranyl diphosphate. Mg(2+) is bound by residues aspartate 339 and aspartate 343. Residues 339–343 carry the DDXXD motif motif; sequence DDIYD. The Mg(2+) site is built by asparagine 484, threonine 488, and glutamate 492.

This sequence belongs to the terpene synthase family. Tpsb subfamily. Mg(2+) serves as cofactor. It depends on Mn(2+) as a cofactor. Predominantly expressed in flowers but also in leaves, siliques and in stems.

It is found in the plastid. It localises to the chloroplast stroma. It carries out the reaction (2E)-geranyl diphosphate = beta-myrcene + diphosphate. The enzyme catalyses (2E)-geranyl diphosphate = tricyclene + diphosphate. It catalyses the reaction (2E)-geranyl diphosphate = (E)-beta-ocimene + diphosphate. Its pathway is secondary metabolite biosynthesis; terpenoid biosynthesis. Its function is as follows. Involved in monoterpene (C10) biosynthesis. The major product is beta-myrcene (56%) followed by (E)-beta-ocimene (20%) and minor amounts (less than 5%) of the cyclic monoterpene (-)-limonene, (+)-limonene, 2-carene and tricyclene. The polypeptide is Tricyclene synthase, chloroplastic (Arabidopsis thaliana (Mouse-ear cress)).